The sequence spans 204 residues: uncharacterized protein (204 aa).

Component of the acid-soluble organic matrix of the aragonitic skeleton (at protein level).

It is found in the secreted. This is an uncharacterized protein from Acropora millepora (Staghorn coral).